The following is a 231-amino-acid chain: Ninja-family protein AFP3 (231 aa).

The segment covering 83–96 (AKRKRSEKQRKHKA) has biased composition (basic residues). Positions 83–152 (AKRKRSEKQR…SAQSQPENLG (70 aa)) are disordered. Residues 130–152 (QATTNKSVETSPSSAQSQPENLG) show a composition bias toward polar residues.

The protein belongs to the Ninja family. As to quaternary structure, forms a heterodimer with AFP2. Interacts with ABI5/DPBF1, DPBF2, AREB3/DPBF3, EEL/DPBF4, ABF1, ABF3/DPBF5 and ABF4/AREB2.

It is found in the nucleus. In terms of biological role, acts as a negative regulator of abscisic acid (ABA) response and stress responses. This chain is Ninja-family protein AFP3 (AFP3), found in Arabidopsis thaliana (Mouse-ear cress).